The sequence spans 473 residues: UDP-glycosyltransferase 71B1 (473 aa).

His-15 serves as the catalytic Proton acceptor. His-15 lines the an anthocyanidin pocket. Asp-110 functions as the Charge relay in the catalytic mechanism. Positions 132, 342, 344, 359, 362, 363, 364, and 367 each coordinate UDP-alpha-D-glucose. Ala-382 is an an anthocyanidin binding site. UDP-alpha-D-glucose contacts are provided by Glu-383 and Gln-384.

This sequence belongs to the UDP-glycosyltransferase family.

The catalysed reaction is a flavonol + UDP-alpha-D-glucose = a flavonol 3-O-beta-D-glucoside + UDP + H(+). Possesses quercetin 3-O-glucosyltransferase activity in vitro. Also active in vitro on benzoates and benzoate derivatives. The protein is UDP-glycosyltransferase 71B1 (UGT71B1) of Arabidopsis thaliana (Mouse-ear cress).